Reading from the N-terminus, the 204-residue chain is Cold and drought-regulated protein CORA (204 aa).

Repeat copies occupy residues 54 to 59 (YNHGGG), 65 to 70 (YNHGGG), 71 to 76 (YNHGGG), 78 to 83 (YHNGGG), 85 to 90 (YNHGGG), 98 to 100 (HGG), 101 to 103 (HGG), 112 to 114 (HGG), 115 to 117 (HGG), 126 to 128 (HGG), 129 to 131 (HGG), 164 to 169 (YNHGGG), 171 to 176 (YNHGGG), 178 to 180 (HGG), 181 to 183 (HGG), 184 to 186 (HGG), 187 to 189 (HGG), and 190 to 192 (HGG). The segment at 54–176 (YNHGGGYNGG…GGGGYNHGGG (123 aa)) is 7 X 6 AA repeats of Y-N-H-G-G-G. The tract at residues 98 to 192 (HGGHGGGGYN…GHGGHGGHGG (95 aa)) is 11 X 3 AA repeats of H-G-G. A compositionally biased stretch (gly residues) spans 169-194 (GGYNHGGGGHGGHGGHGGHGGHGGHG). The disordered stretch occupies residues 169 to 204 (GGYNHGGGGHGGHGGHGGHGGHGGHGAVQTEDNTQN).

This sequence belongs to the GRP family.

Functionally, may be involved in resistance of the plant to environmental stress. The protein is Cold and drought-regulated protein CORA (CORA) of Medicago sativa (Alfalfa).